The following is a 156-amino-acid chain: Snaclec jerdonibitin subunit alpha (156 aa).

The N-terminal stretch at 1–23 is a signal peptide; that stretch reads MGRFIFVSFGLLVVFLSLSGTGA. Cystine bridges form between C25–C36, C53–C150, and C125–C142. The 120-residue stretch at 32–151 folds into the C-type lectin domain; it reads FRQYCYRVFK…CGQQHLFMCK (120 aa).

Belongs to the snaclec family. In terms of assembly, heterodimer of subunits alpha and beta; disulfide-linked. As to expression, expressed by the venom gland.

The protein resides in the secreted. In terms of biological role, snaclec that dose-dependently inhibits platelet aggregation induced by ristocetin or low-dose thrombin, but not by high-dose thrombin. Binds to GPIbalpha (GP1BA). In vivo, also dose-dependently induces thrombocytopenia of mice and platelet counts remains at very low level even after 18 hours intravenous injection. The protein is Snaclec jerdonibitin subunit alpha of Protobothrops jerdonii (Jerdon's pitviper).